Here is a 460-residue protein sequence, read N- to C-terminus: ATP synthase subunit beta (460 aa).

ATP is bound at residue 150–157 (GGAGVGKT).

This sequence belongs to the ATPase alpha/beta chains family. F-type ATPases have 2 components, CF(1) - the catalytic core - and CF(0) - the membrane proton channel. CF(1) has five subunits: alpha(3), beta(3), gamma(1), delta(1), epsilon(1). CF(0) has three main subunits: a(1), b(2) and c(9-12). The alpha and beta chains form an alternating ring which encloses part of the gamma chain. CF(1) is attached to CF(0) by a central stalk formed by the gamma and epsilon chains, while a peripheral stalk is formed by the delta and b chains.

Its subcellular location is the cell inner membrane. The catalysed reaction is ATP + H2O + 4 H(+)(in) = ADP + phosphate + 5 H(+)(out). Its function is as follows. Produces ATP from ADP in the presence of a proton gradient across the membrane. The catalytic sites are hosted primarily by the beta subunits. This Edwardsiella ictaluri (strain 93-146) protein is ATP synthase subunit beta.